Reading from the N-terminus, the 102-residue chain is Large ribosomal subunit protein bL21 (102 aa).

This sequence belongs to the bacterial ribosomal protein bL21 family. In terms of assembly, part of the 50S ribosomal subunit. Contacts protein L20.

In terms of biological role, this protein binds to 23S rRNA in the presence of protein L20. The polypeptide is Large ribosomal subunit protein bL21 (Listeria monocytogenes serotype 4b (strain CLIP80459)).